The following is a 534-amino-acid chain: Probable protein kinase UbiB (534 aa).

The chain crosses the membrane as a helical span at residues 23–43 (DLLFDLPLPWFLLALRFALPW). The Protein kinase domain maps to 125-492 (RFDIEPLASA…WHKRKDDWFL (368 aa)). Residues 131–139 (LASASVAQV) and Lys-153 each bind ATP. Asp-288 functions as the Proton acceptor in the catalytic mechanism. The next 2 membrane-spanning stretches (helical) occupy residues 490–510 (WFLR…AAGG) and 512–532 (LHEL…YLIV).

This sequence belongs to the ABC1 family. UbiB subfamily.

The protein resides in the cell inner membrane. It participates in cofactor biosynthesis; ubiquinone biosynthesis [regulation]. Is probably a protein kinase regulator of UbiI activity which is involved in aerobic coenzyme Q (ubiquinone) biosynthesis. The polypeptide is Probable protein kinase UbiB (Pseudomonas fluorescens (strain ATCC BAA-477 / NRRL B-23932 / Pf-5)).